The chain runs to 163 residues: Sorting nexin-3 (163 aa).

The region spanning 39-162 is the PX domain; the sequence is VEVRDPRTHF…VRFLQDEVFN (124 aa). Residues Arg82, Ser84, Lys113, Arg119, and Arg128 each coordinate a 1,2-diacyl-sn-glycero-3-phospho-(1D-myo-inositol-3-phosphate).

This sequence belongs to the sorting nexin family.

Its subcellular location is the cytoplasm. The protein localises to the golgi apparatus membrane. It is found in the prevacuolar compartment membrane. Functionally, required for retention of late Golgi membrane proteins. Component of the retrieval machinery that functions by direct interaction with the cytosolic tails of certain TGN membrane proteins during the sorting/budding process at the prevacuolar compartment. Binds phosphatidylinositol 3-phosphate (PtdIns(P3)). In Eremothecium gossypii (strain ATCC 10895 / CBS 109.51 / FGSC 9923 / NRRL Y-1056) (Yeast), this protein is Sorting nexin-3 (SNX3).